Consider the following 464-residue polypeptide: ATP synthase subunit beta (464 aa).

153 to 160 contributes to the ATP binding site; it reads GGAGVGKT.

The protein belongs to the ATPase alpha/beta chains family. In terms of assembly, F-type ATPases have 2 components, CF(1) - the catalytic core - and CF(0) - the membrane proton channel. CF(1) has five subunits: alpha(3), beta(3), gamma(1), delta(1), epsilon(1). CF(0) has three main subunits: a(1), b(2) and c(9-12). The alpha and beta chains form an alternating ring which encloses part of the gamma chain. CF(1) is attached to CF(0) by a central stalk formed by the gamma and epsilon chains, while a peripheral stalk is formed by the delta and b chains.

The protein localises to the cell membrane. The catalysed reaction is ATP + H2O + 4 H(+)(in) = ADP + phosphate + 5 H(+)(out). Its function is as follows. Produces ATP from ADP in the presence of a proton gradient across the membrane. The catalytic sites are hosted primarily by the beta subunits. This chain is ATP synthase subunit beta, found in Alkaliphilus oremlandii (strain OhILAs) (Clostridium oremlandii (strain OhILAs)).